We begin with the raw amino-acid sequence, 662 residues long: Glycine--tRNA ligase beta subunit (662 aa).

It belongs to the class-II aminoacyl-tRNA synthetase family. In terms of assembly, tetramer of two alpha and two beta subunits.

Its subcellular location is the cytoplasm. The enzyme catalyses tRNA(Gly) + glycine + ATP = glycyl-tRNA(Gly) + AMP + diphosphate. This Rickettsia akari (strain Hartford) protein is Glycine--tRNA ligase beta subunit.